An 89-amino-acid chain; its full sequence is MIVRTLLIAAALLGGTAQAAESTDLCGANLQKLDDILAVRGKTSVTGARVTEVKELQAKARQDQASGDTKGCITATTQALQILQNAGKK.

The signal sequence occupies residues Met-1–Ala-19.

The protein localises to the secreted. This is an uncharacterized protein from Pseudomonas aeruginosa (strain UCBPP-PA14).